The chain runs to 391 residues: Inositol-tetrakisphosphate 1-kinase 2 (391 aa).

Positions 90 and 132 each coordinate 1D-myo-inositol 1,3,4-trisphosphate. ATP-binding residues include R167 and K217. An ATP-grasp domain is found at 178–384 (KLSDCSGSLF…FFQNLAQVKY (207 aa)). 2 residues coordinate 1D-myo-inositol 1,3,4-trisphosphate: H228 and K260. ATP contacts are provided by residues 249 to 260 (QEFVNHGGVMFK) and S275. Mg(2+) contacts are provided by D340, D355, and N357. N357 provides a ligand contact to 1D-myo-inositol 1,3,4-trisphosphate.

The protein belongs to the ITPK1 family. As to quaternary structure, monomer. Mg(2+) is required as a cofactor. As to expression, expressed in seedling roots, cotyledons, rosette leaves, cauline leaves, stems, flowers, siliques and seeds.

It catalyses the reaction 1D-myo-inositol 3,4,5,6-tetrakisphosphate + ATP = 1D-myo-inositol 1,3,4,5,6-pentakisphosphate + ADP + H(+). It carries out the reaction 1D-myo-inositol 1,3,4-trisphosphate + ATP = 1D-myo-inositol 1,3,4,5-tetrakisphosphate + ADP + H(+). The enzyme catalyses 1D-myo-inositol 1,3,4-trisphosphate + ATP = 1D-myo-inositol 1,3,4,6-tetrakisphosphate + ADP + H(+). Its function is as follows. Kinase that can phosphorylate various inositol polyphosphate such as Ins(3,4,5,6)P4 or Ins(1,3,4)P3. Phosphorylates Ins(3,4,5,6)P4 to form InsP5. This reaction is thought to have regulatory importance, since Ins(3,4,5,6)P4 is an inhibitor of plasma membrane Ca(2+)-activated Cl(-) channels, while Ins(1,3,4,5,6)P5 is not. Also phosphorylates Ins(1,3,4)P3 or a racemic mixture of Ins(1,4,6)P3 and Ins(3,4,6)P3 to form InsP4. Ins(1,3,4,6)P4 is an essential molecule in the hexakisphosphate (InsP6) pathway. Plays a role in seed coat development and lipid polyester barrier formation. The protein is Inositol-tetrakisphosphate 1-kinase 2 (ITPK2) of Arabidopsis thaliana (Mouse-ear cress).